We begin with the raw amino-acid sequence, 361 residues long: Chorismate synthase (361 aa).

NADP(+) contacts are provided by Arg48 and Arg54. FMN contacts are provided by residues 125–127 (RSS), 238–239 (NA), Gly278, 293–297 (KPTSS), and Arg319.

Belongs to the chorismate synthase family. In terms of assembly, homotetramer. FMNH2 is required as a cofactor.

It catalyses the reaction 5-O-(1-carboxyvinyl)-3-phosphoshikimate = chorismate + phosphate. It participates in metabolic intermediate biosynthesis; chorismate biosynthesis; chorismate from D-erythrose 4-phosphate and phosphoenolpyruvate: step 7/7. Catalyzes the anti-1,4-elimination of the C-3 phosphate and the C-6 proR hydrogen from 5-enolpyruvylshikimate-3-phosphate (EPSP) to yield chorismate, which is the branch point compound that serves as the starting substrate for the three terminal pathways of aromatic amino acid biosynthesis. This reaction introduces a second double bond into the aromatic ring system. This is Chorismate synthase from Edwardsiella ictaluri (strain 93-146).